A 213-amino-acid polypeptide reads, in one-letter code: Octanoyltransferase (213 aa).

Residues 32 to 207 (ESTLDEIWLV…NILALLNNPD (176 aa)) form the BPL/LPL catalytic domain. Residues 71–78 (RGGQVTYH), 138–140 (SLG), and 151–153 (GLA) each bind substrate. Cysteine 169 acts as the Acyl-thioester intermediate in catalysis.

The protein belongs to the LipB family.

It is found in the cytoplasm. The catalysed reaction is octanoyl-[ACP] + L-lysyl-[protein] = N(6)-octanoyl-L-lysyl-[protein] + holo-[ACP] + H(+). Its pathway is protein modification; protein lipoylation via endogenous pathway; protein N(6)-(lipoyl)lysine from octanoyl-[acyl-carrier-protein]: step 1/2. Functionally, catalyzes the transfer of endogenously produced octanoic acid from octanoyl-acyl-carrier-protein onto the lipoyl domains of lipoate-dependent enzymes. Lipoyl-ACP can also act as a substrate although octanoyl-ACP is likely to be the physiological substrate. The chain is Octanoyltransferase from Escherichia coli O17:K52:H18 (strain UMN026 / ExPEC).